Consider the following 287-residue polypeptide: 2-dehydro-3-deoxyphosphooctonate aldolase (287 aa).

The protein belongs to the KdsA family.

It is found in the cytoplasm. The enzyme catalyses D-arabinose 5-phosphate + phosphoenolpyruvate + H2O = 3-deoxy-alpha-D-manno-2-octulosonate-8-phosphate + phosphate. It participates in carbohydrate biosynthesis; 3-deoxy-D-manno-octulosonate biosynthesis; 3-deoxy-D-manno-octulosonate from D-ribulose 5-phosphate: step 2/3. Its pathway is bacterial outer membrane biogenesis; lipopolysaccharide biosynthesis. This chain is 2-dehydro-3-deoxyphosphooctonate aldolase, found in Rhodopseudomonas palustris (strain BisB5).